The chain runs to 215 residues: Fibroblast growth factor 10 (215 aa).

Residues Met1–Cys36 form the signal peptide. The segment at Thr49–His73 is disordered. Asn50 carries N-linked (GlcNAc...) asparagine glycosylation. Over residues Ser51–Ser69 the composition is skewed to low complexity. Asn203 carries an N-linked (GlcNAc...) asparagine glycan.

The protein belongs to the heparin-binding growth factors family. As to quaternary structure, interacts with FGFR1 and FGFR2. Interacts with FGFBP1. Preferentially expressed in the lung in adults.

The protein resides in the secreted. Functionally, plays an important role in the regulation of embryonic development, cell proliferation and cell differentiation. Required for normal branching morphogenesis. May play a role in wound healing. This Rattus norvegicus (Rat) protein is Fibroblast growth factor 10 (Fgf10).